We begin with the raw amino-acid sequence, 189 residues long: Apolipophorin-3 (189 aa).

Residues 1–18 (MAAKFVVVLAACVALSHS) form the signal peptide. Positions 19–23 (AMVRR) are excised as a propeptide.

Belongs to the insect apolipophorin-3 family. As to quaternary structure, equilibrium between a soluble monomer and a bound lipoprotein form. Apolipophorin-3 associates with lipophorin during lipid loading until each particle contains 9 or 14 molecules of apolipophorin-3. Hemolymph.

The protein resides in the secreted. In terms of biological role, assists in the loading of diacylglycerol, generated from triacylglycerol stores in the fat body through the action of adipokinetic hormone, into lipophorin, the hemolymph lipoprotein. It increases the lipid carrying capacity of lipophorin by covering the expanding hydrophobic surface resulting from diacylglycerol uptake. It thus plays a critical role in the transport of lipids during flight in several species of insects. This chain is Apolipophorin-3, found in Manduca sexta (Tobacco hawkmoth).